Consider the following 1100-residue polypeptide: DNA repair protein RAD1 (1100 aa).

The tract at residues 1–47 (MSQLFYQGDSDDELQEELTRQTTQASQSSKIKNEDEPDDSNHLNEVE) is disordered. The segment covering 20 to 30 (RQTTQASQSSK) has biased composition (polar residues). Over residues 31–47 (IKNEDEPDDSNHLNEVE) the composition is skewed to basic and acidic residues. Serine 613 carries the phosphoserine modification. Positions 821–901 (VVIVDTREFN…YPTLLIEFDE (81 aa)) constitute an ERCC4 domain. Residues 1063 to 1100 (EKEEQEQESTDENLESPGKTTDDNALHDHHNDVPEAPV) form a disordered region. A compositionally biased stretch (acidic residues) spans 1065–1076 (EEQEQESTDENL). Phosphoserine is present on serine 1071. At threonine 1072 the chain carries Phosphothreonine. Over residues 1082 to 1100 (TTDDNALHDHHNDVPEAPV) the composition is skewed to basic and acidic residues.

Belongs to the XPF family. Component of the nucleotide excision repair factor 1 (NEF1) complex consisting of RAD1, RAD10 and RAD14. Interacts with SAW1.

The protein localises to the nucleus. In terms of biological role, involved in nucleotide excision repair of DNA damaged with UV light, bulky adducts, or cross-linking agents. Along with RAD10 forms an endonuclease that specifically degrades single-stranded DNA. This chain is DNA repair protein RAD1 (RAD1), found in Saccharomyces cerevisiae (strain ATCC 204508 / S288c) (Baker's yeast).